The sequence spans 86 residues: Large ribosomal subunit protein bL27 (86 aa).

The segment covering 1-10 (MAQKKGGGST) has biased composition (gly residues). Residues 1 to 20 (MAQKKGGGSTRNGRDSESKR) form a disordered region.

It belongs to the bacterial ribosomal protein bL27 family.

This is Large ribosomal subunit protein bL27 from Bordetella parapertussis (strain 12822 / ATCC BAA-587 / NCTC 13253).